Here is a 519-residue protein sequence, read N- to C-terminus: Cytochrome P450 monooxygenase AtmP (519 aa).

Residues 21 to 41 (SMLLVVTLVILFLWFIIPSPV) form a helical membrane-spanning segment. Cys457 contributes to the heme binding site.

The protein belongs to the cytochrome P450 family. Heme is required as a cofactor.

It is found in the membrane. Its pathway is secondary metabolite biosynthesis. Functionally, cytochrome P450 monooxygenase; part of the ATM2 gene cluster that mediates the biosynthesis of aflatrem, a tremorgenic mycotoxin with acute neurotoxic effects. Synthesis of geranylgeranyl diphosphate (GGPP) by AtmG (a GGPP synthase) precedes condensation of GGPP with indole 3-glycerol phosphate, followed by epoxidation and cyclization by AtmM (a FAD-dependent monooxygenase) and AtmC (a prenyltransferase) to produce paspaline. AtmB is also essential for paspaline production, but its exact role has not been identified yet. AtmP, a cytochrome P450 monooxygenase, subsequently converts paspaline to 13-desoxypaxilline via PC-M6 by removal of the C-30 methyl group and oxidation at C-10. AtmQ, a cytochrome P450 monooxygenase, then catalyzes the oxidation of 13-desoxypaxilline, first at C-7 to produce paspalicine and then at C-13 to form paspalinine. Finally, AtmD prenylates paspalinine to form aflatrem. The polypeptide is Cytochrome P450 monooxygenase AtmP (Aspergillus flavus).